Reading from the N-terminus, the 370-residue chain is Chaperone protein DnaJ (370 aa).

One can recognise a J domain in the interval 6 to 70; that stretch reads DYYEVLGVQR…EKRSMYDRFG (65 aa). The segment at 128 to 208 adopts a CR-type zinc-finger fold; that stretch reads GVEKTIEYRR…CRGEGRIRQT (81 aa). 8 residues coordinate Zn(2+): C141, C144, C158, C161, C182, C185, C196, and C199. CXXCXGXG motif repeat units follow at residues 141–148, 158–165, 182–189, and 196–203; these read CPACRGSG, CPKCGGLG, CDMCRGEG, and CRECRGEG.

Belongs to the DnaJ family. As to quaternary structure, homodimer. Requires Zn(2+) as cofactor.

It is found in the cytoplasm. Functionally, participates actively in the response to hyperosmotic and heat shock by preventing the aggregation of stress-denatured proteins and by disaggregating proteins, also in an autonomous, DnaK-independent fashion. Unfolded proteins bind initially to DnaJ; upon interaction with the DnaJ-bound protein, DnaK hydrolyzes its bound ATP, resulting in the formation of a stable complex. GrpE releases ADP from DnaK; ATP binding to DnaK triggers the release of the substrate protein, thus completing the reaction cycle. Several rounds of ATP-dependent interactions between DnaJ, DnaK and GrpE are required for fully efficient folding. Also involved, together with DnaK and GrpE, in the DNA replication of plasmids through activation of initiation proteins. This chain is Chaperone protein DnaJ, found in Roseiflexus castenholzii (strain DSM 13941 / HLO8).